A 94-amino-acid polypeptide reads, in one-letter code: Cell division topological specificity factor (94 aa).

This sequence belongs to the MinE family.

Its function is as follows. Prevents the cell division inhibition by proteins MinC and MinD at internal division sites while permitting inhibition at polar sites. This ensures cell division at the proper site by restricting the formation of a division septum at the midpoint of the long axis of the cell. The chain is Cell division topological specificity factor from Hamiltonella defensa subsp. Acyrthosiphon pisum (strain 5AT).